A 424-amino-acid chain; its full sequence is 23S rRNA (uracil(1939)-C(5))-methyltransferase RlmD (424 aa).

The TRAM domain maps to 1–56 (MEKFPAVTVFDLDYQGRGVAKIDGQVVFIEGALPDETVTFCKTSAKKQFIEAVVDE). [4Fe-4S] cluster-binding residues include Cys-69, Cys-75, Cys-78, and Cys-155. S-adenosyl-L-methionine-binding residues include Gln-255, Phe-284, Asn-289, Glu-305, Asp-333, and Asp-354. Cys-380 serves as the catalytic Nucleophile.

The protein belongs to the class I-like SAM-binding methyltransferase superfamily. RNA M5U methyltransferase family. RlmD subfamily.

The enzyme catalyses uridine(1939) in 23S rRNA + S-adenosyl-L-methionine = 5-methyluridine(1939) in 23S rRNA + S-adenosyl-L-homocysteine + H(+). In terms of biological role, catalyzes the formation of 5-methyl-uridine at position 1939 (m5U1939) in 23S rRNA. The polypeptide is 23S rRNA (uracil(1939)-C(5))-methyltransferase RlmD (Dichelobacter nodosus (strain VCS1703A)).